Here is a 443-residue protein sequence, read N- to C-terminus: KH domain-containing, RNA-binding, signal transduction-associated protein 1 (443 aa).

Positions 1–95 are disordered; sequence MQRRDDPAAR…LLPPSATAAA (95 aa). Residues Ser-18 and Ser-20 each carry the phosphoserine modification. Lys-21 carries the post-translational modification N6-acetyllysine. Ser-29 is subject to Phosphoserine. The residue at position 33 (Thr-33) is a Phosphothreonine. 2 positions are modified to asymmetric dimethylarginine; by PRMT1: Arg-45 and Arg-52. Ser-58 bears the Phosphoserine mark. The segment covering 61–72 has biased composition (pro residues); sequence TQPPPLLPPSNP. Over residues 81-95 the composition is skewed to low complexity; it reads SAPTPLLPPSATAAA. Phosphothreonine; by MAPK1 is present on Thr-84. Residues Lys-96 and Lys-102 each participate in a glycyl lysine isopeptide (Lys-Gly) (interchain with G-Cter in SUMO2) cross-link. Residues 100 to 260 form an involved in homodimerization region; sequence ENKYLPELMA…VKKFLVPDMM (161 aa). Ser-113 bears the Phosphoserine mark. Lys-139 is covalently cross-linked (Glycyl lysine isopeptide (Lys-Gly) (interchain with G-Cter in SUMO2)). Ser-150 carries the phosphoserine modification. The region spanning 171–197 is the KH domain; the sequence is NFVGKILGPQGNTIKRLQEETGAKISV. Residue Lys-175 is modified to N6-acetyllysine; alternate. Lys-175 participates in a covalent cross-link: Glycyl lysine isopeptide (Lys-Gly) (interchain with G-Cter in SUMO2); alternate. Thr-183 bears the Phosphothreonine mark. A disordered region spans residues 280–317; sequence PSRGRGVSVRGRGAAPPPPPVPRGRGVGPPRGALVRGT. Arg-282, Arg-284, and Arg-291 each carry omega-N-methylarginine. Residues 283 to 293 are compositionally biased toward low complexity; the sequence is GRGVSVRGRGA. An Asymmetric dimethylarginine; by PRMT1 modification is found at Arg-304. The segment covering 307 to 316 has biased composition (low complexity); sequence GPPRGALVRG. 2 positions are modified to omega-N-methylarginine; by PRMT1: Arg-310 and Arg-315. At Arg-320 the chain carries Dimethylated arginine; alternate. Arg-320 carries the post-translational modification Omega-N-methylarginine; by PRMT1; alternate. Arg-325 is subject to Omega-N-methylarginine; by PRMT1. Positions 326–345 are disordered; that stretch reads GATVTRGVPPPPTVRGAPTP. Dimethylated arginine; alternate occurs at positions 331 and 340. 2 positions are modified to omega-N-methylarginine; by PRMT1; alternate: Arg-331 and Arg-340. Arg-331 carries the asymmetric dimethylarginine; alternate modification. The interaction with HNRNPA1 stretch occupies residues 351–443; sequence GIQRIPLPPT…AYREHPYGRY (93 aa). Tyr-387 is subject to Phosphotyrosine. At Ser-390 the chain carries Phosphoserine. An interaction with ZBTB7A region spans residues 400-420; it reads GHGELQDSYEAYGQDDWNGTR. The interval 411 to 443 is disordered; that stretch reads YGQDDWNGTRPSLKAPPARPVKGAYREHPYGRY. Lys-432 participates in a covalent cross-link: Glycyl lysine isopeptide (Lys-Gly) (interchain with G-Cter in SUMO2). The segment covering 434–443 has biased composition (basic and acidic residues); that stretch reads AYREHPYGRY. Phosphotyrosine; by PTK6 occurs at positions 435, 440, and 443.

This sequence belongs to the KHDRBS family. Self-associates to form homooligomers when bound to RNA, oligomerization appears to be limited when binding to proteins. Interacts with KHDRBS3/SLIM-2. Forms a trimeric complex in the nucleus consisting of BANP, HDAC6 and KHDRBS1/SAM68; HDAC6 keeps KHDRBS1 in a deacetylated state which inhibits the inclusion of CD44 alternate exons. The complex is disrupted by MAPK1/MAPK3-mediated phosphorylation of BANP which results in BANP export to the cytoplasm. This facilitates acetylation of KHDRBS1 and CD44 variant exon inclusion. Interacts with KHDRBS2/SLIM-1; heterooligomer formation of KHDRBS family proteins may modulate RNA substrate specificity. Interacts with PIK3R1, PLCG1. Interacts with RASA1, GRB2, SRC, CBP, PRMT1, APC, HNRNPA1. Interacts with PTK6 (via SH3 and SH2 domains). Forms a complex with ILF2, ILF3, YLPM1, RBMX, NCOA5 and PPP1CA. Binds WBP4/FBP21 (via WW domains), FNBP4/FBP30 (via WW domains). Interacts (via Arg/Gly-rich-flanked Pro-rich regions) with FYN (via the SH3 domain). Interacts with the non-receptor tyrosine kinase SRMS; the interaction leads to phosphorylation of KHDRBS1. Interacts with ZBTB7A; negatively regulates KHDRBS1 splicing activity toward BCL2L1. Tyrosine phosphorylated by several non-receptor tyrosine kinases including LCK, FYN and JAK3. Also tyrosine phosphorylated by the non-receptor tyrosine kinase SRMS in an EGF-dependent manner. Phosphorylation by PTK6 negatively regulates its RNA binding ability. Phosphorylation by PTK6 at Tyr-440 dictates the nuclear localization of KHDRBS1. Post-translationally, acetylated. Positively correlates with ability to bind RNA. Deacetylated by HDAC6; this regulates alternative splicing by inhibiting the inclusion of CD44 alternate exons. In terms of processing, arginine methylation is required for nuclear localization, Inhibits interaction with Src-like SH3 domains, but not interaction with WW domains of WBP4/FBP21 and FNBP4/FBP30.

It localises to the nucleus. It is found in the cytoplasm. The protein resides in the membrane. Functionally, recruited and tyrosine phosphorylated by several receptor systems, for example the T-cell, leptin and insulin receptors. Once phosphorylated, functions as an adapter protein in signal transduction cascades by binding to SH2 and SH3 domain-containing proteins. Role in G2-M progression in the cell cycle. Represses CBP-dependent transcriptional activation apparently by competing with other nuclear factors for binding to CBP. Also acts as a putative regulator of mRNA stability and/or translation rates and mediates mRNA nuclear export. Positively regulates the association of constitutive transport element (CTE)-containing mRNA with large polyribosomes and translation initiation. May not be involved in the nucleocytoplasmic export of unspliced (CTE)-containing RNA species. RNA-binding protein that plays a role in the regulation of alternative splicing and influences mRNA splice site selection and exon inclusion. Binds to RNA containing 5'-[AU]UAA-3' as a bipartite motif spaced by more than 15 nucleotides. Binds poly(A). Can regulate CD44 alternative splicing in a Ras pathway-dependent manner. In cooperation with HNRNPA1 modulates alternative splicing of BCL2L1 by promoting splicing toward isoform Bcl-X(S), and of SMN1. Can regulate alternative splicing of NRXN1 and NRXN3 in the laminin G-like domain 6 containing the evolutionary conserved neurexin alternative spliced segment 4 (AS4) involved in neurexin selective targeting to postsynaptic partners. In a neuronal activity-dependent manner cooperates synergistically with KHDRBS2/SLIM-1 in regulation of NRXN1 exon skipping at AS4. The cooperation with KHDRBS2/SLIM-1 is antagonistic for regulation of NXRN3 alternative splicing at AS4. The protein is KH domain-containing, RNA-binding, signal transduction-associated protein 1 of Rattus norvegicus (Rat).